We begin with the raw amino-acid sequence, 248 residues long: MNICLLCEEGADNSALSALAQRWGLIHDATQTMALVLTPTHLELRKQDEPKLGGIYVDFVAGTMAHRRKFGGGRGEAVAKAVGIKKDYLPDVVDATAGLGRDAFVLASIGCNVRMVERHPVVAALLEDGLKRAYLDADIGEWMQQRMKLIYASSAQALTQISPTPDVVYLDPMYPHKTKSALVKKEMRVFQSLVGADEDADALLAPAMALAKKRVVVKRPDYAEPLNNQPAHASVTTKNHRFDIYPCI.

Residues 101–102, 117–118, 153–154, and Asp-171 each bind S-adenosyl-L-methionine; these read RD, ER, and SS.

This sequence belongs to the methyltransferase superfamily. RsmJ family.

It localises to the cytoplasm. It carries out the reaction guanosine(1516) in 16S rRNA + S-adenosyl-L-methionine = N(2)-methylguanosine(1516) in 16S rRNA + S-adenosyl-L-homocysteine + H(+). Functionally, specifically methylates the guanosine in position 1516 of 16S rRNA. This chain is Ribosomal RNA small subunit methyltransferase J, found in Proteus mirabilis (strain HI4320).